The chain runs to 233 residues: Leucyl/phenylalanyl-tRNA--protein transferase (233 aa).

It belongs to the L/F-transferase family.

It localises to the cytoplasm. It carries out the reaction N-terminal L-lysyl-[protein] + L-leucyl-tRNA(Leu) = N-terminal L-leucyl-L-lysyl-[protein] + tRNA(Leu) + H(+). The catalysed reaction is N-terminal L-arginyl-[protein] + L-leucyl-tRNA(Leu) = N-terminal L-leucyl-L-arginyl-[protein] + tRNA(Leu) + H(+). The enzyme catalyses L-phenylalanyl-tRNA(Phe) + an N-terminal L-alpha-aminoacyl-[protein] = an N-terminal L-phenylalanyl-L-alpha-aminoacyl-[protein] + tRNA(Phe). Functionally, functions in the N-end rule pathway of protein degradation where it conjugates Leu, Phe and, less efficiently, Met from aminoacyl-tRNAs to the N-termini of proteins containing an N-terminal arginine or lysine. The chain is Leucyl/phenylalanyl-tRNA--protein transferase from Shewanella denitrificans (strain OS217 / ATCC BAA-1090 / DSM 15013).